Here is a 321-residue protein sequence, read N- to C-terminus: Transmembrane protein 255A (321 aa).

Transmembrane regions (helical) follow at residues 29 to 49, 56 to 76, 88 to 108, and 200 to 220; these read VFVT…GMAA, VTVG…LGII, LVAS…CAIV, and TILN…LGGF. Polar residues predominate over residues 279–297; that stretch reads STPSGLSDDPNGQASSFMW. The disordered stretch occupies residues 279–300; it reads STPSGLSDDPNGQASSFMWPSN.

It belongs to the TMEM255 family.

It is found in the membrane. This Xenopus laevis (African clawed frog) protein is Transmembrane protein 255A (tmem255a).